The primary structure comprises 321 residues: Ras association domain-containing protein 4 (321 aa).

The segment at 79–159 (HLPSTSWMPR…RPKCRAPGEA (81 aa)) is disordered. Over residues 98–110 (SPQNGNITAQGPS) the composition is skewed to polar residues. S141 is modified (phosphoserine). The region spanning 174–262 (YNHKTSVFTP…ARIFLMEADL (89 aa)) is the Ras-associating domain. Residues 270 to 317 (VAQYIKFEMPVLDSFVEKLKEEEEREIIKLTMKFQALRLTMLQRLEQL) enclose the SARAH domain.

In terms of assembly, interacts directly with activated KRAS in a GTP-dependent manner. In terms of tissue distribution, widely expressed. Frequently down-regulated in tumor cell lines.

In terms of biological role, potential tumor suppressor. May act as a KRAS effector protein. May promote apoptosis and cell cycle arrest. The polypeptide is Ras association domain-containing protein 4 (RASSF4) (Homo sapiens (Human)).